The primary structure comprises 1171 residues: ATP-dependent helicase/deoxyribonuclease subunit B (1171 aa).

The UvrD-like helicase ATP-binding domain occupies 1–287; sequence MSLRFVIGRA…IPLMEQPRFH (287 aa). 8–15 contributes to the ATP binding site; it reads GRAGSGKS. The region spanning 281-587 is the UvrD-like helicase C-terminal domain; that stretch reads MEQPRFHSPA…QFANIPPSLD (307 aa). [4Fe-4S] cluster contacts are provided by Cys-805, Cys-1129, Cys-1132, and Cys-1138.

The protein belongs to the helicase family. AddB/RexB type 1 subfamily. As to quaternary structure, heterodimer of AddA and AddB. It depends on Mg(2+) as a cofactor. [4Fe-4S] cluster is required as a cofactor.

Functionally, the heterodimer acts as both an ATP-dependent DNA helicase and an ATP-dependent, dual-direction single-stranded exonuclease. Recognizes the chi site generating a DNA molecule suitable for the initiation of homologous recombination. The AddB subunit has 5' -&gt; 3' nuclease activity but not helicase activity. This is ATP-dependent helicase/deoxyribonuclease subunit B from Bacillus cereus (strain G9842).